We begin with the raw amino-acid sequence, 111 residues long: Cytochrome bo(3) ubiquinol oxidase subunit 4 (111 aa).

The Cytoplasmic segment spans residues 1–17; sequence MSSAAHDNHGAGHGSLG. A helical membrane pass occupies residues 18–38; that stretch reads SYAIGFVLSVILTAIPFYMVM. The Periplasmic segment spans residues 39–46; that stretch reads DGGFSRHA. The chain crosses the membrane as a helical span at residues 47–67; the sequence is TILTMVVLGLVQVVVHLICFL. The Cytoplasmic segment spans residues 68–80; it reads HMNMSSEGRWNVM. A helical membrane pass occupies residues 81 to 101; it reads AFIFTVIVILLVVGLSLWIIF. The Periplasmic portion of the chain corresponds to 102–111; that stretch reads SADMLMMPMP.

It belongs to the cytochrome c oxidase bacterial subunit 4 family. As to quaternary structure, heterooctamer of two A chains, two B chains, two C chains and two D chains.

The protein localises to the cell inner membrane. In terms of biological role, cytochrome bo(3) ubiquinol terminal oxidase is the component of the aerobic respiratory chain of E.coli that predominates when cells are grown at high aeration. Has proton pump activity across the membrane in addition to electron transfer, pumping 2 protons/electron. This chain is Cytochrome bo(3) ubiquinol oxidase subunit 4 (cyoD), found in Pseudomonas aeruginosa (strain ATCC 15692 / DSM 22644 / CIP 104116 / JCM 14847 / LMG 12228 / 1C / PRS 101 / PAO1).